We begin with the raw amino-acid sequence, 486 residues long: Betaine aldehyde dehydrogenase (486 aa).

K(+) is bound by residues T23 and D90. G147–W149 contacts NAD(+). Catalysis depends on K159, which acts as the Charge relay system. Residues K173–E176 and E226–T229 each bind NAD(+). L241 is a binding site for K(+). E247 (proton acceptor) is an active-site residue. The NAD(+) site is built by G249, C281, and E382. C281 functions as the Nucleophile in the catalytic mechanism. A Cysteine sulfenic acid (-SOH) modification is found at C281. Residues K452 and G455 each contribute to the K(+) site. E459 serves as the catalytic Charge relay system.

This sequence belongs to the aldehyde dehydrogenase family. Dimer of dimers. K(+) serves as cofactor.

The catalysed reaction is betaine aldehyde + NAD(+) + H2O = glycine betaine + NADH + 2 H(+). It functions in the pathway amine and polyamine biosynthesis; betaine biosynthesis via choline pathway; betaine from betaine aldehyde: step 1/1. In terms of biological role, involved in the biosynthesis of the osmoprotectant glycine betaine. Catalyzes the irreversible oxidation of betaine aldehyde to the corresponding acid. The polypeptide is Betaine aldehyde dehydrogenase (Vibrio vulnificus (strain YJ016)).